We begin with the raw amino-acid sequence, 179 residues long: MNETLKQELLQNIREVKDYPKKGILFKDITTLLNYPKLFNKLIDALKKRYTPLNVDFIVGIEARGFILGSALAYALGVGFVPVRKKGKLPAHTLSQSYSLEYGNDSIEIHSDAFRGVKGVKVVLIDDLLATGGTALASLELIKALQAECIEACFLIGLKELLGIQLLEEQVKTFCLLEC.

This sequence belongs to the purine/pyrimidine phosphoribosyltransferase family. In terms of assembly, homodimer.

It is found in the cytoplasm. It catalyses the reaction AMP + diphosphate = 5-phospho-alpha-D-ribose 1-diphosphate + adenine. It functions in the pathway purine metabolism; AMP biosynthesis via salvage pathway; AMP from adenine: step 1/1. Catalyzes a salvage reaction resulting in the formation of AMP, that is energically less costly than de novo synthesis. This is Adenine phosphoribosyltransferase from Helicobacter acinonychis (strain Sheeba).